Consider the following 175-residue polypeptide: MDIAIHHPWIRRPFFPFHSPSRLFDQFFGEHLLESDLFSTATSLSPFYLRPPSFLRAPSWIDTGLSEMRMEKDRFSVNLDVKHFSPEELKVKVLGDVVEVHGKHEERQDEHGFISREFHRKYRIPADVDPLTITSSLSSDGVLTVNGPRKQASGPERTIPITREEKPAVTAAPKK.

The residue at position 1 (Met-1) is an N-acetylmethionine. Ser-19, Ser-45, and Ser-59 each carry phosphoserine. In terms of domain architecture, sHSP spans 56–164 (RAPSWIDTGL…PERTIPITRE (109 aa)). His-83 contacts Zn(2+). An N6-acetyllysine modification is found at Lys-92. The Zn(2+) site is built by His-104, Glu-106, His-111, and His-119. Residues 145–175 (VNGPRKQASGPERTIPITREEKPAVTAAPKK) form a disordered region. An N6-acetyllysine modification is found at Lys-166. The O-linked (GlcNAc) threonine glycan is linked to Thr-170.

The protein belongs to the small heat shock protein (HSP20) family. As to quaternary structure, heteromer composed of three CRYAA and one CRYAB subunits. Aggregates with homologous proteins, including the small heat shock protein HSPB1, to form large heteromeric complexes. Inter-subunit bridging via zinc ions enhances stability, which is crucial as there is no protein turn over in the lens. Interacts with HSPBAP1 and TTN/titin. Interacts with TMEM109; in the cellular response to DNA damage. Interacts with DES; binds rapidly during early stages of DES filament assembly and a reduced binding seen in the later stages. Interacts with TMED10; the interaction mediates the translocation from the cytoplasm into the ERGIC (endoplasmic reticulum-Golgi intermediate compartment) and thereby secretion. Interacts with ATP6V1A and with MTOR, forming a ternary complex. In terms of tissue distribution, lens as well as other tissues.

The protein resides in the cytoplasm. The protein localises to the nucleus. It localises to the secreted. Its subcellular location is the lysosome. May contribute to the transparency and refractive index of the lens. Has chaperone-like activity, preventing aggregation of various proteins under a wide range of stress conditions. In lens epithelial cells, stabilizes the ATP6V1A protein, preventing its degradation by the proteasome. This Mesocricetus auratus (Golden hamster) protein is Alpha-crystallin B chain (CRYAB).